The sequence spans 466 residues: Ras-GEF domain-containing family member 1C (466 aa).

Disordered regions lie at residues 1–35 (MPRTLTASDMVTPGSLSPPPTESTEGEQAGQPLLD) and 443–466 (SESPESQTEKERWKSLRSSILGKT). In terms of domain architecture, N-terminal Ras-GEF spans 34-164 (LDGAPSSASL…LLQTLHQKLA (131 aa)). The region spanning 200 to 446 (DPYTLAQQLT…YLASYESESP (247 aa)) is the Ras-GEF domain.

Functionally, guanine nucleotide exchange factor (GEF). In Mus musculus (Mouse), this protein is Ras-GEF domain-containing family member 1C (Rasgef1c).